The primary structure comprises 223 residues: Urease accessory protein UreF (223 aa).

This sequence belongs to the UreF family. As to quaternary structure, ureD, UreF and UreG form a complex that acts as a GTP-hydrolysis-dependent molecular chaperone, activating the urease apoprotein by helping to assemble the nickel containing metallocenter of UreC. The UreE protein probably delivers the nickel.

Its subcellular location is the cytoplasm. Required for maturation of urease via the functional incorporation of the urease nickel metallocenter. This chain is Urease accessory protein UreF, found in Sinorhizobium medicae (strain WSM419) (Ensifer medicae).